The sequence spans 298 residues: UDP-3-O-acyl-N-acetylglucosamine deacetylase (298 aa).

Zn(2+) contacts are provided by H80, H239, and D243. The Proton donor role is filled by H266.

Belongs to the LpxC family. Zn(2+) is required as a cofactor.

It carries out the reaction a UDP-3-O-[(3R)-3-hydroxyacyl]-N-acetyl-alpha-D-glucosamine + H2O = a UDP-3-O-[(3R)-3-hydroxyacyl]-alpha-D-glucosamine + acetate. The protein operates within glycolipid biosynthesis; lipid IV(A) biosynthesis; lipid IV(A) from (3R)-3-hydroxytetradecanoyl-[acyl-carrier-protein] and UDP-N-acetyl-alpha-D-glucosamine: step 2/6. In terms of biological role, catalyzes the hydrolysis of UDP-3-O-myristoyl-N-acetylglucosamine to form UDP-3-O-myristoylglucosamine and acetate, the committed step in lipid A biosynthesis. This chain is UDP-3-O-acyl-N-acetylglucosamine deacetylase, found in Blochmanniella floridana.